The following is a 273-amino-acid chain: Chlorophyll a-b binding protein 8, chloroplastic (273 aa).

The transit peptide at 1 to 32 directs the protein to the chloroplast; it reads MATQALISSSSISTSAEAARQIIGSRISQSVT. Arg33 carries the N2-acetylarginine modification. Trp56 contacts chlorophyll b. Chlorophyll a-binding residues include Phe76, Ser82, and Glu100. Residue Arg105 coordinates chlorophyll b. A helical transmembrane segment spans residues 106 to 126; the sequence is FAMLGAAGAIAPEILGKAGLI. Ile140, Glu167, and Arg170 together coordinate chlorophyll b. Chlorophyll a contacts are provided by Lys224, Glu225, Asn228, Arg230, Gln242, and His257. A helical membrane pass occupies residues 231–251; it reads LAMLAILGYFIQALVTGVGPY.

It belongs to the light-harvesting chlorophyll a/b-binding (LHC) protein family. The LHC complex consists of chlorophyll a-b binding proteins. It depends on Binds at least 14 chlorophylls (8 Chl-a and 6 Chl-b) and carotenoids such as lutein and neoxanthin. as a cofactor. Photoregulated by reversible phosphorylation of its threonine residues.

The protein localises to the plastid. It is found in the chloroplast thylakoid membrane. Functionally, the light-harvesting complex (LHC) functions as a light receptor, it captures and delivers excitation energy to photosystems with which it is closely associated. In Solanum lycopersicum (Tomato), this protein is Chlorophyll a-b binding protein 8, chloroplastic (CAB8).